Reading from the N-terminus, the 141-residue chain is Hemoglobin subunit alpha (141 aa).

The region spanning 1 to 141 (VLSADDKANV…VSTVLTSKYR (141 aa)) is the Globin domain. The residue at position 3 (serine 3) is a Phosphoserine. 2 positions are modified to N6-succinyllysine: lysine 7 and lysine 11. N6-acetyllysine; alternate is present on lysine 16. At lysine 16 the chain carries N6-succinyllysine; alternate. Tyrosine 24 is modified (phosphotyrosine). Position 35 is a phosphoserine (serine 35). Position 40 is an N6-succinyllysine (lysine 40). Serine 49 carries the post-translational modification Phosphoserine. Residue histidine 58 coordinates O2. Histidine 87 is a binding site for heme b. Serine 102 carries the phosphoserine modification. Threonine 108 bears the Phosphothreonine mark. Serine 124 and serine 131 each carry phosphoserine. Threonine 134 and threonine 137 each carry phosphothreonine. Residue serine 138 is modified to Phosphoserine.

The protein belongs to the globin family. In terms of assembly, heterotetramer of two alpha chains and two beta chains. As to expression, red blood cells.

Functionally, involved in oxygen transport from the lung to the various peripheral tissues. The polypeptide is Hemoglobin subunit alpha (Peromyscus californicus (California mouse)).